Consider the following 685-residue polypeptide: Methionine--tRNA ligase (685 aa).

The short motif at 12–22 (PYANGSIHLGH) is the 'HIGH' region element. Cys143, Cys146, Cys156, and Cys159 together coordinate Zn(2+). The 'KMSKS' region motif lies at 339 to 343 (KMSKS). Lys342 provides a ligand contact to ATP. Positions 582–685 (DFMKIDMRVA…AGAQPGDKVG (104 aa)) constitute a tRNA-binding domain.

This sequence belongs to the class-I aminoacyl-tRNA synthetase family. MetG type 1 subfamily. In terms of assembly, homodimer. Zn(2+) is required as a cofactor.

The protein localises to the cytoplasm. The catalysed reaction is tRNA(Met) + L-methionine + ATP = L-methionyl-tRNA(Met) + AMP + diphosphate. Its function is as follows. Is required not only for elongation of protein synthesis but also for the initiation of all mRNA translation through initiator tRNA(fMet) aminoacylation. This Neisseria meningitidis serogroup C (strain 053442) protein is Methionine--tRNA ligase.